We begin with the raw amino-acid sequence, 352 residues long: MLREFSFYDVPPAHVPPVSEPLEIACYSLSRDRELLLDDSKLSYYYPPPLFSDLNTGFPNRFHPPKSDPDPISIVKDVLMTKGIQMNSSFLTWRGLITKIMCAPLDPRNHWETYLVMDPTSGIIMMEERTRSETSYANQDRMCYWGYKFEAISTLPEIWDACSRDQIEQRDNQDVVPDEQYCSIVKINIGKSKLILAGEVDCIWDKKPCSAKESDVHSDDGTIEEDASNAENPNLHYVELKTSKKYPLENYGMRKKLLKYWAQSFLLGIGRIIIGFRDDNGILIEMKELFTHQIPKMLRPYFKPNDWTPNRLLVVLEHALEWIKQTVKQHPPSTEFTLSYTGGSKLVLRQII.

Substrate-binding positions include Arg33 and 93 to 95 (WRG). Glu150 is an a divalent metal cation binding site. The substrate site is built by Cys182 and Glu199. Asp201 is a binding site for a divalent metal cation. Residue Ser218 is modified to Phosphoserine. Residues Glu239 and Leu240 each coordinate a divalent metal cation. Substrate is bound by residues Lys241 and Gln263.

The protein belongs to the DXO/Dom3Z family. In terms of assembly, interacts with dhp1/Rat1; the interaction is direct, stabilizes dhp1 protein structure and stimulates its exoribonuclease activity. The interaction also stimulates din1 pyrophosphohydrolase activity, probably by recruiting it to mRNA substrates. A divalent metal cation is required as a cofactor.

Its subcellular location is the nucleus. The enzyme catalyses a 5'-end NAD(+)-phospho-ribonucleoside in mRNA + H2O = a 5'-end phospho-ribonucleoside in mRNA + NAD(+) + H(+). It catalyses the reaction a 5'-end (N(7)-methyl 5'-triphosphoguanosine)-ribonucleoside-ribonucleotide in mRNA + H2O = a (N(7)-methyl 5'-triphosphoguanosine)-nucleoside + a 5'-end phospho-ribonucleoside in mRNA + H(+). The catalysed reaction is a 5'-end triphospho-ribonucleoside in mRNA + H2O = a 5'-end phospho-ribonucleoside in mRNA + diphosphate + H(+). Its function is as follows. Decapping enzyme for NAD-capped RNAs: specifically hydrolyzes the nicotinamide adenine dinucleotide (NAD) cap from a subset of RNAs by removing the entire NAD moiety from the 5'-end of an NAD-capped RNA. The NAD-cap is present at the 5'-end of some RNAs and snoRNAs. In contrast to the canonical 5'-end N7 methylguanosine (m7G) cap, the NAD cap promotes mRNA decay. Also acts as a non-canonical decapping enzyme that removes the entire cap structure of m7G capped or incompletely capped RNAs and mediates their subsequent degradation. Specifically degrades pre-mRNAs with a defective m7G cap and is part of a pre-mRNA capping quality control. Has decapping activity toward incomplete 5'-end m7G cap mRNAs such as unmethylated 5'-end-capped RNA (cap0), while it has no activity toward 2'-O-ribose methylated m7G cap (cap1). Also possesses RNA 5'-pyrophosphohydrolase activity by hydrolyzing the 5'-end triphosphate to release pyrophosphates. Stimulates exoribonuclease activity of dhp1, allowing it to degrade RNAs with stable secondary structure more effectively. This Schizosaccharomyces pombe (strain 972 / ATCC 24843) (Fission yeast) protein is Decapping nuclease din1.